Here is an 846-residue protein sequence, read N- to C-terminus: MTQVTVKELAQEVEAPVERLLQQMREAGLPHTDAGQVVTDNEKQTLLTHLKSSHKSKAEEPRKITLQRKTTSTLRVAGSKSISVEVRKKKVFVQRSPEEIQAEQKRELDERRAAENAARDKVEAEVRQRNEEQARRQAAGSAAAAPAPAAKPEPAPAAAPVAAPAPVVADAPASEDAAARAAERKKDETRRNESRTRDDDRRRGEAPRVSIKVKVKEKEKAPTPRAAPRTTDEESDGARRGRGGKSKLKKRNQHGFQNPTGPVIRDVTIGETITVSELANQMSVKGAEVVKFMFKMGTPVTINQVLDQETAQLIAEELGHKVTLVSDTALEDSLAESLKFEGQTESRAPVVTVMGHVDHGKTSLLDYIRRAKVAAGEAGGITQHIGAYHVETDRGMVTFLDTPGHAAFTQMRARGAKATDIVILVVAADDGVMPQTREAVQHAKAAGVPLVVAVNKIDKPGADLDRIRNELSVEGVTSEDWGGDTPFVKVSAKMGTGVDELLEAVLLQAEILELTATPTAPGRGVVVESRLDKGRGPVATILVQDGTLRQGDMVLCGSNYGRVRAMLDENGKPVKEAGPSIPVEILGLDGTPEAGDELSVVADEKKAREVALFRQGKYREVKLARAHAGKLENIFETMGQEEKKTLNIVLKTDVRGSLEALQGSLGGLGNDEVQVRVIGGGVGGITESDANLALASNAVLFGFNVRADAGARKIVEQEGLDMRYYNVIYDIIEDVKKALTGMLGSDVRENILGVAEVRDVFRSPKFGAIAGCMVIEGTVYRNRPIRVLRDDVVIFEGELESLRRFKDDASEVRSGMECGIGVKSYNDVKVGDKIEVFEKVQVARTL.

The interval glutamine 94 to valine 263 is disordered. The span at serine 96–arginine 135 shows a compositional bias: basic and acidic residues. Composition is skewed to low complexity over residues arginine 136–proline 148 and alanine 158–aspartate 176. Composition is skewed to basic and acidic residues over residues alanine 177–alanine 206 and threonine 230–arginine 239. Basic residues predominate over residues arginine 240 to glutamine 253. One can recognise a tr-type G domain in the interval serine 346 to glutamate 513. Positions glycine 355–threonine 362 are G1. Residue glycine 355 to threonine 362 coordinates GTP. The interval glycine 380–histidine 384 is G2. Residues aspartate 401–glycine 404 form a G3 region. GTP is bound by residues aspartate 401–histidine 405 and asparagine 455–aspartate 458. The segment at asparagine 455–aspartate 458 is G4. Residues serine 491–lysine 493 form a G5 region.

Belongs to the TRAFAC class translation factor GTPase superfamily. Classic translation factor GTPase family. IF-2 subfamily.

It localises to the cytoplasm. Its function is as follows. One of the essential components for the initiation of protein synthesis. Protects formylmethionyl-tRNA from spontaneous hydrolysis and promotes its binding to the 30S ribosomal subunits. Also involved in the hydrolysis of GTP during the formation of the 70S ribosomal complex. The polypeptide is Translation initiation factor IF-2 (Pseudomonas putida (strain ATCC 47054 / DSM 6125 / CFBP 8728 / NCIMB 11950 / KT2440)).